The sequence spans 169 residues: Peptide methionine sulfoxide reductase MsrA 1 (169 aa).

Residue Cys-12 is part of the active site.

This sequence belongs to the MsrA Met sulfoxide reductase family.

The catalysed reaction is L-methionyl-[protein] + [thioredoxin]-disulfide + H2O = L-methionyl-(S)-S-oxide-[protein] + [thioredoxin]-dithiol. It catalyses the reaction [thioredoxin]-disulfide + L-methionine + H2O = L-methionine (S)-S-oxide + [thioredoxin]-dithiol. In terms of biological role, has an important function as a repair enzyme for proteins that have been inactivated by oxidation. Catalyzes the reversible oxidation-reduction of methionine sulfoxide in proteins to methionine. The chain is Peptide methionine sulfoxide reductase MsrA 1 (msrA1) from Staphylococcus aureus (strain Mu50 / ATCC 700699).